Reading from the N-terminus, the 278-residue chain is Large ribosomal subunit protein uL2 (278 aa).

The disordered stretch occupies residues 222–264 (GVAMNPIDHPHGGGEGRTSGGRHPVTPWGKPTKGRKTRKNKAT).

The protein belongs to the universal ribosomal protein uL2 family. As to quaternary structure, part of the 50S ribosomal subunit. Forms a bridge to the 30S subunit in the 70S ribosome.

One of the primary rRNA binding proteins. Required for association of the 30S and 50S subunits to form the 70S ribosome, for tRNA binding and peptide bond formation. It has been suggested to have peptidyltransferase activity; this is somewhat controversial. Makes several contacts with the 16S rRNA in the 70S ribosome. This chain is Large ribosomal subunit protein uL2, found in Phenylobacterium zucineum (strain HLK1).